We begin with the raw amino-acid sequence, 461 residues long: Cysteine--tRNA ligase (461 aa).

Position 28 (Cys28) interacts with Zn(2+). A 'HIGH' region motif is present at residues 30 to 40 (VTIYDLCHIGH). Positions 209, 234, and 238 each coordinate Zn(2+). Positions 266–270 (KMSKS) match the 'KMSKS' region motif. Residue Lys269 participates in ATP binding.

This sequence belongs to the class-I aminoacyl-tRNA synthetase family. As to quaternary structure, monomer. Requires Zn(2+) as cofactor.

Its subcellular location is the cytoplasm. The enzyme catalyses tRNA(Cys) + L-cysteine + ATP = L-cysteinyl-tRNA(Cys) + AMP + diphosphate. The protein is Cysteine--tRNA ligase of Hamiltonella defensa subsp. Acyrthosiphon pisum (strain 5AT).